The chain runs to 1240 residues: DNA-directed RNA polymerase subunit beta (1240 aa).

It belongs to the RNA polymerase beta chain family. In terms of assembly, the RNAP catalytic core consists of 2 alpha, 1 beta, 1 beta' and 1 omega subunit. When a sigma factor is associated with the core the holoenzyme is formed, which can initiate transcription.

It catalyses the reaction RNA(n) + a ribonucleoside 5'-triphosphate = RNA(n+1) + diphosphate. Its function is as follows. DNA-dependent RNA polymerase catalyzes the transcription of DNA into RNA using the four ribonucleoside triphosphates as substrates. This is DNA-directed RNA polymerase subunit beta from Rhodopirellula baltica (strain DSM 10527 / NCIMB 13988 / SH1).